The chain runs to 542 residues: Chloride channel CLIC-like protein 1 (542 aa).

Residues 1–18 (MLYSLLLCECLWLITAYA) form the signal peptide. At 19–184 (HDDEWIDPTD…EEFFGVDPYN (166 aa)) the chain is on the lumenal side. A helical transmembrane segment spans residues 185–205 (VFMVLLCLLCIVALVATELWT). The Cytoplasmic segment spans residues 206–216 (YVRWYTQLKRV). The helical transmembrane segment at 217–237 (FFISFLISLGWNWMYLYKLAF) threads the bilayer. Over 238–329 (AQHQAEVAKM…GEFIKALMKE (92 aa)) the chain is Lumenal. A helical membrane pass occupies residues 330 to 350 (IPVLLHIPVLIIMALAVLSFC). Residues 351–542 (YGAGKSVNML…PASTAVEVCG (192 aa)) are Cytoplasmic-facing. The tract at residues 369–394 (EAPQALQAGERRRQQKIDYRPHGGAG) is disordered. The span at 377 to 389 (GERRRQQKIDYRP) shows a compositional bias: basic and acidic residues. 2 positions are modified to phosphoserine: Ser-438 and Ser-464. A disordered region spans residues 452 to 542 (AREHPKVVPG…PASTAVEVCG (91 aa)). Residues 480-491 (ESTPTESSTESS) show a composition bias toward low complexity. Thr-482 bears the Phosphothreonine mark. Ser-532 is subject to Phosphoserine.

The protein belongs to the chloride channel MCLC family. In terms of assembly, homomultimers. Interacts with mitochondrial protein PIGBOS1 (via C-terminus); the interaction occurs at the mitochondria-associated endoplasmic reticulum (ER) membrane, a zone of contact between the ER and mitochondrial membranes, but does not appear to play a role in ER-mitochondria tethering and is not affected by ER stress. Interacts with CALR.

It localises to the endoplasmic reticulum membrane. The enzyme catalyses chloride(in) = chloride(out). The catalysed reaction is bromide(in) = bromide(out). It catalyses the reaction nitrate(in) = nitrate(out). It carries out the reaction fluoride(in) = fluoride(out). Its function is as follows. Anion-selective channel with Ca(2+)-dependent and voltage-independent gating. Permeable to small monovalent anions with selectivity for bromide &gt; chloride &gt; nitrate &gt; fluoride. Operates in the endoplasmic reticulum (ER) membrane where it mediates chloride efflux to compensate for the loss of positive charges from the ER lumen upon Ca(2+) release. Contributes to the maintenance of ER Ca(2+) pools and activation of unfolded protein response to prevent accumulation of misfolded proteins in the ER lumen. Particularly involved in ER homeostasis mechanisms underlying motor neurons and retinal photoreceptors survival. The protein is Chloride channel CLIC-like protein 1 (CLCC1) of Bos taurus (Bovine).